The sequence spans 177 residues: ATP synthase subunit delta (177 aa).

The protein belongs to the ATPase delta chain family. In terms of assembly, F-type ATPases have 2 components, F(1) - the catalytic core - and F(0) - the membrane proton channel. F(1) has five subunits: alpha(3), beta(3), gamma(1), delta(1), epsilon(1). F(0) has three main subunits: a(1), b(2) and c(10-14). The alpha and beta chains form an alternating ring which encloses part of the gamma chain. F(1) is attached to F(0) by a central stalk formed by the gamma and epsilon chains, while a peripheral stalk is formed by the delta and b chains.

It is found in the cell inner membrane. Functionally, f(1)F(0) ATP synthase produces ATP from ADP in the presence of a proton or sodium gradient. F-type ATPases consist of two structural domains, F(1) containing the extramembraneous catalytic core and F(0) containing the membrane proton channel, linked together by a central stalk and a peripheral stalk. During catalysis, ATP synthesis in the catalytic domain of F(1) is coupled via a rotary mechanism of the central stalk subunits to proton translocation. This protein is part of the stalk that links CF(0) to CF(1). It either transmits conformational changes from CF(0) to CF(1) or is implicated in proton conduction. In Sodalis glossinidius (strain morsitans), this protein is ATP synthase subunit delta.